A 405-amino-acid polypeptide reads, in one-letter code: Caspase-1 (405 aa).

A CARD domain is found at 1–91 (MADKVLKEKR…HLAETLRLSS (91 aa)). Positions 1–119 (MADKVLKEKR…SSPALQAMPD (119 aa)) are excised as a propeptide. Residues histidine 238 and cysteine 286 contribute to the active site. A propeptide spanning residues 299–317 (STGTSGNSSSLAPDDFEDD) is cleaved from the precursor. Serine 303 is subject to Phosphoserine.

This sequence belongs to the peptidase C14A family. As to quaternary structure, heterotetramer that consists of two anti-parallel arranged heterodimers, each one formed by a 20 kDa (Caspase-1 subunit p20) and a 10 kDa (Caspase-1 subunit p10) subunit. May be a component of the inflammasome, a protein complex which also includes PYCARD, CARD8 and NLRP2 and whose function would be the activation of pro-inflammatory caspases. Component of the AIM2 PANoptosome complex, a multiprotein complex that drives inflammatory cell death (PANoptosis). Both the p10 and p20 subunits interact with MEFV. Interacts with CARD17P/INCA and CARD18. Interacts with SERPINB1; this interaction regulates CASP1 activity. Heterotetramer that consists of two anti-parallel arranged heterodimers, each one formed by a 20 kDa (Caspase-1 subunit p20) and a 10 kDa (Caspase-1 subunit p10) subunit. Post-translationally, the two subunits are derived from the precursor sequence by an autocatalytic mechanism. Ubiquitinated via 'Lys-11'-linked polyubiquitination. Deubiquitinated by USP8.

The protein localises to the cytoplasm. Its subcellular location is the cell membrane. It carries out the reaction Strict requirement for an Asp residue at position P1 and has a preferred cleavage sequence of Tyr-Val-Ala-Asp-|-.. Its function is as follows. Thiol protease involved in a variety of inflammatory processes by proteolytically cleaving other proteins, such as the precursors of the inflammatory cytokines interleukin-1 beta (IL1B) and interleukin 18 (IL18) as well as the pyroptosis inducer Gasdermin-D (GSDMD), into active mature peptides. Plays a key role in cell immunity as an inflammatory response initiator: once activated through formation of an inflammasome complex, it initiates a pro-inflammatory response through the cleavage of the two inflammatory cytokines IL1B and IL18, releasing the mature cytokines which are involved in a variety of inflammatory processes. Cleaves a tetrapeptide after an Asp residue at position P1. Also initiates pyroptosis, a programmed lytic cell death pathway, through cleavage of GSDMD. In contrast to cleavage of interleukin IL1B, recognition and cleavage of GSDMD is not strictly dependent on the consensus cleavage site but depends on an exosite interface on CASP1 that recognizes and binds the Gasdermin-D, C-terminal (GSDMD-CT) part. Cleaves and activates CASP7 in response to bacterial infection, promoting plasma membrane repair. Upon inflammasome activation, during DNA virus infection but not RNA virus challenge, controls antiviral immunity through the cleavage of CGAS, rendering it inactive. In apoptotic cells, cleaves SPHK2 which is released from cells and remains enzymatically active extracellularly. This is Caspase-1 (CASP1) from Equus caballus (Horse).